The following is a 719-amino-acid chain: Protein borderless (719 aa).

Positions 1–33 are cleaved as a signal peptide; it reads MPAKRSRTFRQSGSALLALLAIILLMNISCTSA. The Extracellular portion of the chain corresponds to 34–650; it reads ARDHRRQTNL…IDVPSQRKVR (617 aa). Ig-like domains lie at 40–128, 134–241, 246–334, and 341–429; these read QTNL…CQVS, PSVR…AFLN, AKVI…PVIS, and PIFS…AELM. Intrachain disulfides connect Cys55-Cys125, Cys172-Cys224, Cys267-Cys318, and Cys363-Cys413. Fibronectin type-III domains follow at residues 434-527 and 555-646; these read APRA…TLPS and APWN…VPSQ. The helical transmembrane segment at 651 to 671 threads the bilayer; the sequence is ALIIGSSVGVIFLLCALCAFL. The Cytoplasmic portion of the chain corresponds to 672-719; that stretch reads YVKRSCLRHLFAKDSSASEDEDTAESGDCDSDEQDQRDRDSIKIRQST. Residues 685-719 form a disordered region; the sequence is DSSASEDEDTAESGDCDSDEQDQRDRDSIKIRQST. The span at 688 to 704 shows a compositional bias: acidic residues; it reads ASEDEDTAESGDCDSDE. Positions 705–719 are enriched in basic and acidic residues; sequence QDQRDRDSIKIRQST.

It belongs to the immunoglobulin superfamily. Interacts with tutl. In the visual system, expressed in lamina and medulla (at protein level).

Its subcellular location is the cell membrane. It localises to the cell projection. The protein localises to the axon. In terms of biological role, in the developing eye, has a role in axonal targeting of the R7 photoreceptor where it functions together with tutl. Probably mediates homotypic cell adhesion; the effect is inhibited by Lar. This is Protein borderless from Drosophila melanogaster (Fruit fly).